The sequence spans 239 residues: Ribonuclease HII (239 aa).

The RNase H type-2 domain occupies 30-221 (GPVAGVDEVG…VRRVATRSNG (192 aa)). A divalent metal cation is bound by residues aspartate 36, glutamate 37, and aspartate 130. The disordered stretch occupies residues 219-239 (SNGAAAAEREADPPQERDGTG). Basic and acidic residues predominate over residues 225 to 239 (AEREADPPQERDGTG).

It belongs to the RNase HII family. It depends on Mn(2+) as a cofactor. The cofactor is Mg(2+).

The protein resides in the cytoplasm. It carries out the reaction Endonucleolytic cleavage to 5'-phosphomonoester.. Endonuclease that specifically degrades the RNA of RNA-DNA hybrids. The chain is Ribonuclease HII from Mycobacterium marinum (strain ATCC BAA-535 / M).